Consider the following 72-residue polypeptide: Small ribosomal subunit protein bS20 (72 aa).

This sequence belongs to the bacterial ribosomal protein bS20 family.

Its function is as follows. Binds directly to 16S ribosomal RNA. The protein is Small ribosomal subunit protein bS20 (rpsT) of Klebsiella pneumoniae.